The primary structure comprises 237 residues: Fluoroquinolones export permease protein MT2761 (237 aa).

6 consecutive transmembrane segments (helical) span residues 20-40 (FLHA…PMPV), 49-69 (YVLV…TVFF), 96-116 (VLLA…HGLG), 119-139 (LLPL…VGFS), 147-167 (VTDW…PPVV), and 199-219 (LAPW…AGLC).

As to quaternary structure, the complex is composed of 2 ATP-binding proteins and 2 transmembrane proteins.

The protein localises to the cell membrane. Part of the ABC transporter complex involved in fluoroquinolones export. Probably responsible for the translocation of the substrate across the membrane. The chain is Fluoroquinolones export permease protein MT2761 from Mycobacterium tuberculosis (strain CDC 1551 / Oshkosh).